Here is a 470-residue protein sequence, read N- to C-terminus: Uronate isomerase (470 aa).

This sequence belongs to the metallo-dependent hydrolases superfamily. Uronate isomerase family.

It catalyses the reaction D-glucuronate = D-fructuronate. The catalysed reaction is aldehydo-D-galacturonate = keto-D-tagaturonate. It participates in carbohydrate metabolism; pentose and glucuronate interconversion. In Salmonella paratyphi A (strain ATCC 9150 / SARB42), this protein is Uronate isomerase.